A 588-amino-acid polypeptide reads, in one-letter code: Tannase (588 aa).

Positions 1-18 (MRQHSRMAVAALAAGANA) are cleaved as a signal peptide. 3 disulfides stabilise this stretch: Cys-25–Cys-71, Cys-194–Cys-502, and Cys-261–Cys-278. Ser-195 acts as the Acyl-ester intermediate in catalysis. Ca(2+) contacts are provided by Asp-262, Asp-265, Asp-269, and Val-271. A Pyrrolidone carboxylic acid modification is found at Gln-317. Residues Asp-455 and His-501 each act as charge relay system in the active site.

This sequence belongs to the tannase family. Heterooctamer of 4 33 kDa and 4 30 kDa subunits linked by disulfide bond(s). In terms of processing, the protein is glycosylated to a carbohydrate content of 22.7%. The N-terminus of the 30 kDa subunit is blocked.

The enzyme catalyses digallate + H2O = 2 3,4,5-trihydroxybenzoate + H(+). Its function is as follows. Hydrolyzes ester bonds of tannic acid to produce gallic acid and glucose. This Aspergillus oryzae (strain ATCC 42149 / RIB 40) (Yellow koji mold) protein is Tannase.